The following is a 209-amino-acid chain: Pyroglutamyl-peptidase 1 (209 aa).

Residues Glu-85, Cys-149, and His-168 contribute to the active site.

It belongs to the peptidase C15 family. In terms of assembly, monomer.

It is found in the cytoplasm. The catalysed reaction is Release of an N-terminal pyroglutamyl group from a polypeptide, the second amino acid generally not being Pro.. Inhibited by transition metal ions including Ni(2+), Zn(2+), and Cu(2+) and by sulfhydryl-blocking agents. Functionally, removes 5-oxoproline from various penultimate amino acid residues except L-proline. The chain is Pyroglutamyl-peptidase 1 (PGPEP1) from Homo sapiens (Human).